A 244-amino-acid chain; its full sequence is Ureidoacrylate amidohydrolase RutB (244 aa).

D38 serves as the catalytic Proton acceptor. The active site involves K147. C180 serves as the catalytic Nucleophile.

This sequence belongs to the isochorismatase family. RutB subfamily.

The catalysed reaction is (Z)-3-ureidoacrylate + H2O + H(+) = (Z)-3-aminoacrylate + NH4(+) + CO2. It carries out the reaction (Z)-3-ureidoacrylate + H2O = (Z)-3-aminoacrylate + carbamate + H(+). It catalyses the reaction (Z)-2-methylureidoacrylate + H2O + H(+) = (Z)-2-methylaminoacrylate + NH4(+) + CO2. Functionally, hydrolyzes ureidoacrylate to form aminoacrylate and carbamate. The carbamate hydrolyzes spontaneously, thereby releasing one of the nitrogen atoms of the pyrimidine ring as ammonia and one of its carbon atoms as CO2. The protein is Ureidoacrylate amidohydrolase RutB of Shigella sonnei (strain Ss046).